The chain runs to 202 residues: Glycerol-3-phosphate acyltransferase (202 aa).

4 helical membrane passes run 2–22 (ANLL…AVVV), 82–102 (DTGL…PVFH), 119–139 (AIDP…AFFF), and 158–178 (VLMN…VLLI).

Belongs to the PlsY family. Probably interacts with PlsX.

The protein localises to the cell inner membrane. The enzyme catalyses an acyl phosphate + sn-glycerol 3-phosphate = a 1-acyl-sn-glycero-3-phosphate + phosphate. It functions in the pathway lipid metabolism; phospholipid metabolism. In terms of biological role, catalyzes the transfer of an acyl group from acyl-phosphate (acyl-PO(4)) to glycerol-3-phosphate (G3P) to form lysophosphatidic acid (LPA). This enzyme utilizes acyl-phosphate as fatty acyl donor, but not acyl-CoA or acyl-ACP. The chain is Glycerol-3-phosphate acyltransferase from Cupriavidus taiwanensis (strain DSM 17343 / BCRC 17206 / CCUG 44338 / CIP 107171 / LMG 19424 / R1) (Ralstonia taiwanensis (strain LMG 19424)).